The following is a 245-amino-acid chain: 1-(5-phosphoribosyl)-5-[(5-phosphoribosylamino)methylideneamino] imidazole-4-carboxamide isomerase (245 aa).

Residue Asp7 is the Proton acceptor of the active site. The active-site Proton donor is Asp129.

Belongs to the HisA/HisF family.

The protein resides in the cytoplasm. It carries out the reaction 1-(5-phospho-beta-D-ribosyl)-5-[(5-phospho-beta-D-ribosylamino)methylideneamino]imidazole-4-carboxamide = 5-[(5-phospho-1-deoxy-D-ribulos-1-ylimino)methylamino]-1-(5-phospho-beta-D-ribosyl)imidazole-4-carboxamide. The protein operates within amino-acid biosynthesis; L-histidine biosynthesis; L-histidine from 5-phospho-alpha-D-ribose 1-diphosphate: step 4/9. In Shewanella sp. (strain MR-4), this protein is 1-(5-phosphoribosyl)-5-[(5-phosphoribosylamino)methylideneamino] imidazole-4-carboxamide isomerase.